We begin with the raw amino-acid sequence, 263 residues long: Ribosomal RNA large subunit methyltransferase E (263 aa).

S-adenosyl-L-methionine-binding residues include Gly-50, Trp-52, Asp-68, Asn-84, and Asp-109. Lys-149 serves as the catalytic Proton acceptor. The region spanning 196 to 254 is the TRAM domain; it reads PLRKGDKFVVDIEKLGSSGDGAVLIEGFVVFVKEVEVGEKVRIKITDVKPNFAFADVAE.

It belongs to the class I-like SAM-binding methyltransferase superfamily. RNA methyltransferase RlmE family.

It is found in the cytoplasm. It carries out the reaction uridine(2552) in 23S rRNA + S-adenosyl-L-methionine = 2'-O-methyluridine(2552) in 23S rRNA + S-adenosyl-L-homocysteine + H(+). In terms of biological role, specifically methylates the uridine in position 2552 of 23S rRNA at the 2'-O position of the ribose in the fully assembled 50S ribosomal subunit. This is Ribosomal RNA large subunit methyltransferase E from Methanosarcina barkeri (strain Fusaro / DSM 804).